Here is a 330-residue protein sequence, read N- to C-terminus: MSTKVEEILWAEKYRPKTLDDIVNQREIIDRLKKFVKEKNMPHLLFAGPPGTGKTTAALALVHDLYGDNYTEYFLELNASDERGIDVIRNKVKEFARTVIPGDIPFKVVLLDEADNMTADAQQALRRTMELYTENTRFILACNYLSKIIEPIQSRTALFRFYPLKKEDVVNRLIYIAKNEKAEYDQKALETIYDITMGDMRKSINILQAASAYGKISVEAVFKVLGLAQPKEVREMINLALQGKFTQARDKLRTLLITYGLSGEDIVKQIHREITSSEIQISEELRVLLLDYIGETEFRIIEGADDEIQLSALLAKMAIYGNKYIGSENR.

An ATP-binding site is contributed by 48 to 55 (GPPGTGKT).

Belongs to the activator 1 small subunits family. RfcS subfamily. Heteropentamer composed of four small subunits (RfcS) and one large subunit (RfcL). A homotetramer of this subunit interacts with PCNA heterodimer PCNA1-PCNA2.

In terms of biological role, part of the RFC clamp loader complex which loads the PCNA sliding clamp onto DNA. The complex possesses DNA-dependent ATPase activity. The polypeptide is Replication factor C small subunit (rfcS) (Saccharolobus solfataricus (strain ATCC 35092 / DSM 1617 / JCM 11322 / P2) (Sulfolobus solfataricus)).